A 425-amino-acid chain; its full sequence is Histidine--tRNA ligase (425 aa).

It belongs to the class-II aminoacyl-tRNA synthetase family. As to quaternary structure, homodimer.

The protein resides in the cytoplasm. It catalyses the reaction tRNA(His) + L-histidine + ATP = L-histidyl-tRNA(His) + AMP + diphosphate + H(+). The chain is Histidine--tRNA ligase from Streptomyces coelicolor (strain ATCC BAA-471 / A3(2) / M145).